The sequence spans 158 residues: MRTFSLKAGEIDKRWVLIDASDMVVGRLAAYIATILRGKHKPEYTPHMDCGDNVVVVNASSVKFTRNKMRDKVYYRHTGYPGGLKSCTPNDMLRAGYAERIIKVAVWRMLGDGPLARRRFKNLKVYSGPEHGHHAQKPVALDFGAMNNKNGRGNNAGR.

The segment at 129-158 (PEHGHHAQKPVALDFGAMNNKNGRGNNAGR) is disordered. A compositionally biased stretch (low complexity) spans 144–158 (GAMNNKNGRGNNAGR).

It belongs to the universal ribosomal protein uL13 family. Part of the 50S ribosomal subunit.

Its function is as follows. This protein is one of the early assembly proteins of the 50S ribosomal subunit, although it is not seen to bind rRNA by itself. It is important during the early stages of 50S assembly. In Anaplasma phagocytophilum (strain HZ), this protein is Large ribosomal subunit protein uL13.